A 314-amino-acid chain; its full sequence is DNA-directed RNA polymerase subunit alpha (314 aa).

An alpha N-terminal domain (alpha-NTD) region spans residues 1–228 (MIEIEKPVIE…EHLNIFVGLT (228 aa)). The tract at residues 245-314 (KEKVLEMTIE…ELGLGLRKEE (70 aa)) is alpha C-terminal domain (alpha-CTD).

It belongs to the RNA polymerase alpha chain family. Homodimer. The RNAP catalytic core consists of 2 alpha, 1 beta, 1 beta' and 1 omega subunit. When a sigma factor is associated with the core the holoenzyme is formed, which can initiate transcription.

It catalyses the reaction RNA(n) + a ribonucleoside 5'-triphosphate = RNA(n+1) + diphosphate. Functionally, DNA-dependent RNA polymerase catalyzes the transcription of DNA into RNA using the four ribonucleoside triphosphates as substrates. This chain is DNA-directed RNA polymerase subunit alpha, found in Halalkalibacterium halodurans (strain ATCC BAA-125 / DSM 18197 / FERM 7344 / JCM 9153 / C-125) (Bacillus halodurans).